The sequence spans 213 residues: Probable transaldolase (213 aa).

Lys-83 functions as the Schiff-base intermediate with substrate in the catalytic mechanism.

This sequence belongs to the transaldolase family. Type 3B subfamily.

It is found in the cytoplasm. The catalysed reaction is D-sedoheptulose 7-phosphate + D-glyceraldehyde 3-phosphate = D-erythrose 4-phosphate + beta-D-fructose 6-phosphate. The protein operates within carbohydrate degradation; pentose phosphate pathway; D-glyceraldehyde 3-phosphate and beta-D-fructose 6-phosphate from D-ribose 5-phosphate and D-xylulose 5-phosphate (non-oxidative stage): step 2/3. In terms of biological role, transaldolase is important for the balance of metabolites in the pentose-phosphate pathway. The protein is Probable transaldolase of Geobacillus thermodenitrificans (strain NG80-2).